We begin with the raw amino-acid sequence, 156 residues long: 17.4 kDa class I heat shock protein (156 aa).

Residues 42–156 enclose the sHSP domain; it reads DVAAFTNAKV…PEVKSVDISG (115 aa).

This sequence belongs to the small heat shock protein (HSP20) family. In terms of assembly, may form oligomeric structures. Binds to AKR2A.

It is found in the cytoplasm. The polypeptide is 17.4 kDa class I heat shock protein (HSP17.4A) (Arabidopsis thaliana (Mouse-ear cress)).